The following is a 102-amino-acid chain: Small ribosomal subunit protein uS10 (102 aa).

Belongs to the universal ribosomal protein uS10 family. Part of the 30S ribosomal subunit.

Involved in the binding of tRNA to the ribosomes. This is Small ribosomal subunit protein uS10 from Clostridium botulinum (strain ATCC 19397 / Type A).